The chain runs to 429 residues: Alanine aminotransferase (429 aa).

Residues Gly65 and Asn204 each contribute to the L-alanine site. The residue at position 265 (Lys265) is an N6-(pyridoxal phosphate)lysine. Position 403 (Arg403) interacts with L-alanine.

Belongs to the class-I pyridoxal-phosphate-dependent aminotransferase family. Homodimer. Pyridoxal 5'-phosphate is required as a cofactor.

It localises to the cytoplasm. It carries out the reaction L-alanine + 2-oxoglutarate = pyruvate + L-glutamate. The sequence is that of Alanine aminotransferase (aspC) from Mycobacterium bovis (strain ATCC BAA-935 / AF2122/97).